We begin with the raw amino-acid sequence, 399 residues long: Serine/threonine-protein kinase PKZ1 (399 aa).

The tract at residues 30–50 (PMQCAYQTQSHSNPEGAKRGR) is disordered. A Protein kinase domain is found at 92–371 (WQLFDQIGAG…ADQMLQHPWM (280 aa)). ATP contacts are provided by residues 98 to 106 (IGAGAFGVV) and lysine 121. The active-site Proton acceptor is the aspartate 219.

Belongs to the protein kinase superfamily. CAMK Ser/Thr protein kinase family. In terms of assembly, interacts with BZP1.

The catalysed reaction is L-seryl-[protein] + ATP = O-phospho-L-seryl-[protein] + ADP + H(+). It catalyses the reaction L-threonyl-[protein] + ATP = O-phospho-L-threonyl-[protein] + ADP + H(+). Functionally, may regulate an early stage of the zoospore pathway. The polypeptide is Serine/threonine-protein kinase PKZ1 (Phytophthora infestans (Potato late blight agent)).